The sequence spans 449 residues: Glutamyl-tRNA reductase (449 aa).

Substrate-binding positions include 58-61 (TCNR), S121, 126-128 (ETQ), and Q132. The active-site Nucleophile is C59. 203–208 (GLGEMA) serves as a coordination point for NADP(+).

The protein belongs to the glutamyl-tRNA reductase family. Homodimer.

The catalysed reaction is (S)-4-amino-5-oxopentanoate + tRNA(Glu) + NADP(+) = L-glutamyl-tRNA(Glu) + NADPH + H(+). Its pathway is porphyrin-containing compound metabolism; protoporphyrin-IX biosynthesis; 5-aminolevulinate from L-glutamyl-tRNA(Glu): step 1/2. Functionally, catalyzes the NADPH-dependent reduction of glutamyl-tRNA(Glu) to glutamate 1-semialdehyde (GSA). This chain is Glutamyl-tRNA reductase, found in Helicobacter pylori (strain Shi470).